Consider the following 447-residue polypeptide: MDMLLNPLNRRHRLRHDIPVVPGAFPLVGHLPAVVCDLPRLLRRAERTLGSHFWLDFGPAGHLMTSLDPDALALLRHKDVSSGLIEDIAPELFGGTLVAQDGIAHRQARDAIQAALLPKGLTLAGIGELFAPVIRARVQRWRERGDVTILRETGDLMLKLIFSLMGIPAQDLPGWHRKYRQLLQLIVAPPVDLPGLPLRRGRAARDWIDARLREFVRAAREHASRTGLINDMVSAFDRSDDALSDDVLVANIRLLLLGGHDTTASTMAWMVIELARQPGLWDALVEEAQRVGAVPTRHADLAQCPVAEALFRETLRVHPATPLLVRRALRELRIGQQRIPTGTDLCIPLLHFSTSALLHEAPDQFRLARWLQRTEPIRPVDMLQFGTGPHFCMGYHLVWLELVQFCIALALTMHEAGVRPRLLSGVEKGRRYYPTAHPSMTIRIGFS.

Residue Cys-392 participates in heme binding.

This sequence belongs to the cytochrome P450 family. The cofactor is heme.

Its function is as follows. Cytochromes P450 are a group of heme-thiolate monooxygenases. They oxidize a variety of structurally unrelated compounds, including steroids, fatty acids, and xenobiotics. This chain is Cytochrome P450 BJ-4 (cyp117), found in Bradyrhizobium diazoefficiens (strain JCM 10833 / BCRC 13528 / IAM 13628 / NBRC 14792 / USDA 110).